We begin with the raw amino-acid sequence, 342 residues long: DNA-directed RNA polymerase subunit alpha (342 aa).

Residues Met-1–Gln-239 form an alpha N-terminal domain (alpha-NTD) region. The tract at residues Ile-254 to Tyr-342 is alpha C-terminal domain (alpha-CTD).

Belongs to the RNA polymerase alpha chain family. As to quaternary structure, homodimer. The RNAP catalytic core consists of 2 alpha, 1 beta, 1 beta' and 1 omega subunit. When a sigma factor is associated with the core the holoenzyme is formed, which can initiate transcription.

The catalysed reaction is RNA(n) + a ribonucleoside 5'-triphosphate = RNA(n+1) + diphosphate. In terms of biological role, DNA-dependent RNA polymerase catalyzes the transcription of DNA into RNA using the four ribonucleoside triphosphates as substrates. This chain is DNA-directed RNA polymerase subunit alpha, found in Orientia tsutsugamushi (strain Boryong) (Rickettsia tsutsugamushi).